A 415-amino-acid polypeptide reads, in one-letter code: MGRRPQLRLVKALLLLGLNPVSTSLQDQRCENLSLTSNVSGLQCNASVDLIGTCWPRSPAGQLVVRPCPAFFYGVRYNTTNNGYRECLANGSWAARVNYSECQEILNEEKKSKVHYHVAVIINYLGHCISLVALLVAFVLFLRLRSIRCLRNIIHWNLISAFILRNATWFVVQLTVSPEVHQSNVAWCRLVTAAYNYFHVTNFFWMFGEGCYLHTAIVLTYSTDRLRKWMFVCIGWGVPFPIIVAWAIGKLHYDNEKCWFGKRPGVYTDYIYQGPMILVLLINFIFLFNIVRILMTKLRASTTSETIQYRKAVKATLVLLPLLGITYMLFFVNPGEDEVSRVVFIYFNSFLESFQGFFVSVFYCFLNSEVRSAIRKRWRRWQDKHSIRARVARAMSIPTSPTRVSFHSIKQSTAV.

The signal sequence occupies residues 1 to 23 (MGRRPQLRLVKALLLLGLNPVST). Residues 24–111 (SLQDQRCENL…CQEILNEEKK (88 aa)) are Extracellular-facing. 3 cysteine pairs are disulfide-bonded: C30-C54, C44-C87, and C68-C102. N-linked (GlcNAc...) asparagine glycosylation is found at N38, N45, N78, N90, and N98. The tract at residues 99-108 (YSECQEILNE) is important for peptide agonist binding. The chain crosses the membrane as a helical span at residues 112–142 (SKVHYHVAVIINYLGHCISLVALLVAFVLFL). Over 143–149 (RLRSIRC) the chain is Cytoplasmic. A helical membrane pass occupies residues 150-174 (LRNIIHWNLISAFILRNATWFVVQL). The Extracellular portion of the chain corresponds to 175–189 (TVSPEVHQSNVAWCR). A disulfide bridge links C188 with C258. The helical transmembrane segment at 190–218 (LVTAAYNYFHVTNFFWMFGEGCYLHTAIV) threads the bilayer. Residues 219 to 225 (LTYSTDR) lie on the Cytoplasmic side of the membrane. Residues 226-253 (LRKWMFVCIGWGVPFPIIVAWAIGKLHY) form a helical membrane-spanning segment. The Extracellular segment spans residues 254-269 (DNEKCWFGKRPGVYTD). A helical transmembrane segment spans residues 270-295 (YIYQGPMILVLLINFIFLFNIVRILM). Residues 280-290 (LLINFIFLFNI) form an important for antagonist binding region. At 296–306 (TKLRASTTSET) the chain is on the cytoplasmic side. At S301 the chain carries Phosphoserine; by PKA. A helical membrane pass occupies residues 307–331 (IQYRKAVKATLVLLPLLGITYMLFF). The Extracellular portion of the chain corresponds to 332–338 (VNPGEDE). Residues 339–368 (VSRVVFIYFNSFLESFQGFFVSVFYCFLNS) form a helical membrane-spanning segment. Residues 369–415 (EVRSAIRKRWRRWQDKHSIRARVARAMSIPTSPTRVSFHSIKQSTAV) lie on the Cytoplasmic side of the membrane.

Belongs to the G-protein coupled receptor 2 family. In terms of assembly, interacts (via N-terminal extracellular domain) with CRH and UCN. Interacts with DLG1; this inhibits endocytosis of CRHR1 after agonist binding. Heterodimer; heterodimerizes with GPER1. In terms of processing, C-terminal Ser or Thr residues may be phosphorylated. Post-translationally, phosphorylation at Ser-301 by PKA prevents maximal coupling to Gq-protein, and thereby negatively regulates downstream signaling. As to expression, detected in brain, especially in cerebellum. Detected in pituitary gland, and at lower levels in the olfactory bulb.

The protein resides in the cell membrane. Its subcellular location is the endosome. Its function is as follows. G-protein coupled receptor for CRH (corticotropin-releasing factor) and UCN (urocortin). Has high affinity for CRH and UCN. Ligand binding causes a conformation change that triggers signaling via guanine nucleotide-binding proteins (G proteins) and down-stream effectors, such as adenylate cyclase. Promotes the activation of adenylate cyclase, leading to increased intracellular cAMP levels. Inhibits the activity of the calcium channel CACNA1H. Required for normal embryonic development of the adrenal gland and for normal hormonal responses to stress. Plays a role in the response to anxiogenic stimuli. In Rattus norvegicus (Rat), this protein is Corticotropin-releasing factor receptor 1 (Crhr1).